The sequence spans 25 residues: Panurgine R (25 aa).

2 disulfide bridges follow: Cys-8–Cys-23 and Cys-11–Cys-19.

The protein localises to the target cell membrane. It is found in the secreted. Antimicrobial peptide active against Gram-positive bacteria M.luteus (MIC=0.8 uM) and B.subtilis (MIC=1.5 uM). Less active against Gram-negative bacteria E.coli (MIC=32.5 uM) and yeast C.albicans (MIC=18.7 uM). Not active against S.aureus and P.aeruginosa. Has no hemolytic activity against human erythrocytes. Probably acts by disrupting membranes of target cells. This chain is Panurgine R, found in Panurgus calcaratus (Solitary bee).